The following is a 179-amino-acid chain: Adenine phosphoribosyltransferase (179 aa).

Belongs to the purine/pyrimidine phosphoribosyltransferase family. As to quaternary structure, homodimer.

Its subcellular location is the cytoplasm. It catalyses the reaction AMP + diphosphate = 5-phospho-alpha-D-ribose 1-diphosphate + adenine. It participates in purine metabolism; AMP biosynthesis via salvage pathway; AMP from adenine: step 1/1. In terms of biological role, catalyzes a salvage reaction resulting in the formation of AMP, that is energically less costly than de novo synthesis. This Helicobacter pylori (strain J99 / ATCC 700824) (Campylobacter pylori J99) protein is Adenine phosphoribosyltransferase.